The sequence spans 489 residues: Tripartite motif-containing protein 10 (489 aa).

The RING-type zinc-finger motif lies at 16 to 61 (CPICQGTLREPVTIDCGHNFCRGCLTRYCEIPGPESEESLSCPLCK). Residues 94–135 (EVEDACPEHGEKIYFFCEEDEAQLCVVCRETGQHGAHTVRFL) form a B box-type zinc finger. Residues Cys99, His102, Cys121, and His127 each coordinate Zn(2+). Residues 144–180 (EQIQKCLVCLRKEREEIQETQSRENKRIQVLLTQVAT) adopt a coiled-coil conformation. Residues 292-486 (QEMKTFLEKL…FSLSCQEGAV (195 aa)) enclose the B30.2/SPRY domain.

The protein belongs to the TRIM/RBCC family. As to quaternary structure, interacts with IFNAR1; this interaction prevents association of IFNAR1 with TYK2. Expressed in embryonic liver.

The protein resides in the cytoplasm. Its function is as follows. E3 ligase that plays an essential role in the differentiation and survival of terminal erythroid cells. May directly bind to PTEN and promote its ubiquitination, resulting in its proteasomal degradation and activation of hypertrophic signaling. In addition, plays a role in immune response regulation by repressing the phosphorylation of STAT1 and STAT2 in the interferon/JAK/STAT signaling pathway independent of its E3 ligase activity. Mechanistically, interacts with the intracellular domain of IFNAR1 and thereby inhibits the association between TYK2 and IFNAR1. The protein is Tripartite motif-containing protein 10 (Trim10) of Mus musculus (Mouse).